A 202-amino-acid polypeptide reads, in one-letter code: Holliday junction branch migration complex subunit RuvA (202 aa).

Positions 1–64 are domain I; it reads MIDFLKGRLV…ETALEMFGFS (64 aa). The interval 65–143 is domain II; sequence SELDRTAFLL…KQQVAVSAEL (79 aa). A flexible linker region spans residues 144-152; that stretch reads PASDGVPVL. Positions 152 to 202 are domain III; that stretch reads LAGRAENEALAALISLGYTPREAREALNRLPDRKLDAAGLVHAALRIMGSQ.

The protein belongs to the RuvA family. As to quaternary structure, homotetramer. Forms an RuvA(8)-RuvB(12)-Holliday junction (HJ) complex. HJ DNA is sandwiched between 2 RuvA tetramers; dsDNA enters through RuvA and exits via RuvB. An RuvB hexamer assembles on each DNA strand where it exits the tetramer. Each RuvB hexamer is contacted by two RuvA subunits (via domain III) on 2 adjacent RuvB subunits; this complex drives branch migration. In the full resolvosome a probable DNA-RuvA(4)-RuvB(12)-RuvC(2) complex forms which resolves the HJ.

It is found in the cytoplasm. In terms of biological role, the RuvA-RuvB-RuvC complex processes Holliday junction (HJ) DNA during genetic recombination and DNA repair, while the RuvA-RuvB complex plays an important role in the rescue of blocked DNA replication forks via replication fork reversal (RFR). RuvA specifically binds to HJ cruciform DNA, conferring on it an open structure. The RuvB hexamer acts as an ATP-dependent pump, pulling dsDNA into and through the RuvAB complex. HJ branch migration allows RuvC to scan DNA until it finds its consensus sequence, where it cleaves and resolves the cruciform DNA. The protein is Holliday junction branch migration complex subunit RuvA of Desulforudis audaxviator (strain MP104C).